The chain runs to 496 residues: Beta-amylase (496 aa).

Substrate-binding residues include Asp-54, His-94, and Asp-102. The active-site Proton donor is Glu-187. 3 residues coordinate substrate: Lys-296, His-301, and Thr-343. Catalysis depends on Glu-381, which acts as the Proton acceptor. Residues 382–383 and Arg-421 each bind substrate; that span reads NA. Positions 455–496 are disordered; it reads YNHGIPPLKRSGPKIPDDVLNEATKPIPPFPWDSETDMKVDG.

It belongs to the glycosyl hydrolase 14 family.

The catalysed reaction is Hydrolysis of (1-&gt;4)-alpha-D-glucosidic linkages in polysaccharides so as to remove successive maltose units from the non-reducing ends of the chains.. This Medicago sativa (Alfalfa) protein is Beta-amylase (BMY1).